The chain runs to 210 residues: Oxygen-insensitive NADPH nitroreductase (210 aa).

Residue glycine 150–glycine 155 participates in NADP(+) binding.

Belongs to the nitroreductase family.

Its function is as follows. Reduction of a variety of nitroaromatic compounds using NADPH as source of reducing equivalents; two electrons are transferred. The polypeptide is Oxygen-insensitive NADPH nitroreductase (rdxA) (Helicobacter pylori (strain J99 / ATCC 700824) (Campylobacter pylori J99)).